The sequence spans 95 residues: MTEQQWNFAGIEAAASAIQGNVTSIHSLLDEGKQSLTKLAAAWGGSGSEAYQGVQQKWDATATELNNALQNLARTISEAGQAMASTEGNVTGMFA.

2 helical membrane-spanning segments follow: residues 11 to 43 (IEAA…AAAW) and 49 to 85 (EAYQ…AMAS). A coiled-coil region spans residues 56–87 (QKWDATATELNNALQNLARTISEAGQAMASTE).

It belongs to the WXG100 family. ESAT-6 subfamily. As to quaternary structure, forms a tight 1:1 complex with EsxB (CFP-10).

It localises to the secreted. The protein resides in the host membrane. A secreted protein. Acts as a strong host T-cell antigen. Plays a number of roles in modulating the host's immune response to infection as well as being responsible for bacterial escape into the host cytoplasm. The sequence is that of 6 kDa early secretory antigenic target (esxA) from Mycobacterium bovis (strain ATCC BAA-935 / AF2122/97).